We begin with the raw amino-acid sequence, 492 residues long: Cytochrome P450 26A1 (492 aa).

Cys-437 is a heme binding site.

Belongs to the cytochrome P450 family. The cofactor is heme.

It is found in the endoplasmic reticulum membrane. The protein localises to the microsome membrane. The catalysed reaction is all-trans-retinoate + reduced [NADPH--hemoprotein reductase] + O2 = all-trans-(4S)-hydroxyretinoate + oxidized [NADPH--hemoprotein reductase] + H2O + H(+). It catalyses the reaction all-trans-(4S)-hydroxyretinoate + reduced [NADPH--hemoprotein reductase] + O2 = all-trans-(4S,16)-dihydroxyretinoate + oxidized [NADPH--hemoprotein reductase] + H2O + H(+). It carries out the reaction all-trans-retinoate + reduced [NADPH--hemoprotein reductase] + O2 = all-trans-18-hydroxyretinoate + oxidized [NADPH--hemoprotein reductase] + H2O + H(+). Functionally, a cytochrome P450 monooxygenase involved in the metabolism of retinoates (RAs), the active metabolites of vitamin A, and critical signaling molecules in animals. RAs exist as at least four different isomers: all-trans-RA (atRA), 9-cis-RA, 13-cis-RA, and 9,13-dicis-RA, where atRA is considered to be the biologically active isomer, although 9-cis-RA and 13-cis-RA also have activity. Catalyzes the hydroxylation of atRA primarily at C-4 and C-18, thereby contributing to the regulation of atRA homeostasis and signaling. Hydroxylation of atRA limits its biological activity and initiates a degradative process leading to its eventual elimination. Involved in the convertion of atRA to all-trans-4-oxo-RA. Able to metabolize other RAs such as 9-cis, 13-cis and 9,13-di-cis RA. Can oxidize all-trans-13,14-dihydroretinoate (DRA) to metabolites which could include all-trans-4-oxo-DRA, all-trans-4-hydroxy-DRA, all-trans-5,8-epoxy-DRA, and all-trans-18-hydroxy-DRA. May play a role in the oxidative metabolism of xenobiotics such as tazarotenic acid. This Gallus gallus (Chicken) protein is Cytochrome P450 26A1 (CYP26A1).